The primary structure comprises 197 residues: Peptidyl-tRNA hydrolase (197 aa).

Y18 provides a ligand contact to tRNA. Catalysis depends on H23, which acts as the Proton acceptor. Residues F69, N71, and N117 each contribute to the tRNA site.

This sequence belongs to the PTH family. As to quaternary structure, monomer.

The protein resides in the cytoplasm. It catalyses the reaction an N-acyl-L-alpha-aminoacyl-tRNA + H2O = an N-acyl-L-amino acid + a tRNA + H(+). Functionally, hydrolyzes ribosome-free peptidyl-tRNAs (with 1 or more amino acids incorporated), which drop off the ribosome during protein synthesis, or as a result of ribosome stalling. Catalyzes the release of premature peptidyl moieties from peptidyl-tRNA molecules trapped in stalled 50S ribosomal subunits, and thus maintains levels of free tRNAs and 50S ribosomes. The chain is Peptidyl-tRNA hydrolase from Psychromonas ingrahamii (strain DSM 17664 / CCUG 51855 / 37).